Here is a 1117-residue protein sequence, read N- to C-terminus: Protein rliB (1117 aa).

An N-terminal signal peptide occupies residues 1–23; the sequence is MKNINNKILKIFILFLAICSVKS. N-linked (GlcNAc...) asparagine glycosylation is found at Asn-136, Asn-195, Asn-279, and Asn-318. In terms of domain architecture, G8 spans 266 to 392; it reads STWSNNLVPQ…YHNSWTKLAS (127 aa). PbH1 repeat units follow at residues 522-544 and 545-567; these read VQKSYISDCVVTKSYYRCYTIHG and TNNLTLTRNVAFDVNGHCYYLED. 2 N-linked (GlcNAc...) asparagine glycosylation sites follow: Asn-547 and Asn-605. The stretch at 621-642 is one PbH1 3 repeat; sequence NAYNTIIGNSASGGWAGFSFPN. Asn-728, Asn-845, Asn-1030, Asn-1044, Asn-1091, and Asn-1107 each carry an N-linked (GlcNAc...) asparagine glycan.

The protein belongs to the comF family.

Its subcellular location is the secreted. This chain is Protein rliB (rliB), found in Dictyostelium discoideum (Social amoeba).